An 82-amino-acid chain; its full sequence is UPF0213 protein MW0443 (82 aa).

The 76-residue stretch at 2–77 (DSHFVYIVKC…KTYTRQKKLR (76 aa)) folds into the GIY-YIG domain.

The protein belongs to the UPF0213 family.

This is UPF0213 protein MW0443 from Staphylococcus aureus (strain MW2).